The chain runs to 212 residues: Probable GTP-binding protein EngB (212 aa).

One can recognise an EngB-type G domain in the interval 27-211 (GPPEIAFAGR…QAAIVLAANG (185 aa)). GTP-binding positions include 35 to 42 (GRSNVGKS), 62 to 66 (GRTQE), 89 to 92 (DMPG), 156 to 159 (TKTD), and 190 to 192 (TSS). Ser-42 and Thr-64 together coordinate Mg(2+).

Belongs to the TRAFAC class TrmE-Era-EngA-EngB-Septin-like GTPase superfamily. EngB GTPase family. It depends on Mg(2+) as a cofactor.

Necessary for normal cell division and for the maintenance of normal septation. This chain is Probable GTP-binding protein EngB, found in Mesorhizobium japonicum (strain LMG 29417 / CECT 9101 / MAFF 303099) (Mesorhizobium loti (strain MAFF 303099)).